Consider the following 340-residue polypeptide: MTMAGNFSPLVLVGDSDRVEAEAVGAYLDNWAGKDGLRLATADAIKAILAGATRLAGRIARGSLPGDPGKLVGVNSDQDQQKCIDVGSHNLFVELLIAAGAASILSEEADLPVAGKADGLIAVAIDPLDGSGNVGLGAPLGTIFSIFPADTAEPFLQPGNRQIAAGYVSFGNSVDLGFSVGEGVIFATFDPASGIFHITRRNVTLPERTSDLAFNASVQRHLSAGMQAYVNDAFLGKDGPRGRNFNMRWLGAAVGDMHRIMQRGGLFFYVNDSRPGYEKGRLRLVYEANPIAFLAREAGGKATDGSRSILDIVPQTYHERSALVFGVAEEVDILGEYFAK.

Residues Glu107, Asp126, Leu128, and Asp129 each contribute to the Mg(2+) site. Asn215 serves as a coordination point for substrate. Position 287 (Glu287) interacts with Mg(2+).

This sequence belongs to the FBPase class 1 family. Homotetramer. The cofactor is Mg(2+).

It localises to the cytoplasm. It carries out the reaction beta-D-fructose 1,6-bisphosphate + H2O = beta-D-fructose 6-phosphate + phosphate. It participates in carbohydrate biosynthesis; gluconeogenesis. This is Fructose-1,6-bisphosphatase class 1 from Brucella anthropi (strain ATCC 49188 / DSM 6882 / CCUG 24695 / JCM 21032 / LMG 3331 / NBRC 15819 / NCTC 12168 / Alc 37) (Ochrobactrum anthropi).